Reading from the N-terminus, the 131-residue chain is Fluoride-specific ion channel FluC 1 (131 aa).

A run of 3 helical transmembrane segments spans residues 38 to 58 (FPLSTLVINGVASLCAGIAMM), 69 to 89 (TVMMFVVGFLGGFSTFSTALN), and 108 to 128 (IATVAVPLICVAAGFGIALLA). The Na(+) site is built by G79 and S82.

The protein belongs to the fluoride channel Fluc/FEX (TC 1.A.43) family.

Its subcellular location is the cell membrane. It carries out the reaction fluoride(in) = fluoride(out). Na(+) is not transported, but it plays an essential structural role and its presence is essential for fluoride channel function. Fluoride-specific ion channel. Important for reducing fluoride concentration in the cell, thus reducing its toxicity. This Bifidobacterium longum (strain NCC 2705) protein is Fluoride-specific ion channel FluC 1.